We begin with the raw amino-acid sequence, 637 residues long: Biosynthetic arginine decarboxylase (637 aa).

Lys-107 carries the N6-(pyridoxal phosphate)lysine modification. 289–299 (LDVGGGLGVDY) lines the substrate pocket.

Belongs to the Orn/Lys/Arg decarboxylase class-II family. SpeA subfamily. Requires Mg(2+) as cofactor. Pyridoxal 5'-phosphate is required as a cofactor.

It carries out the reaction L-arginine + H(+) = agmatine + CO2. Catalyzes the biosynthesis of agmatine from arginine. The polypeptide is Biosynthetic arginine decarboxylase (Thermosynechococcus vestitus (strain NIES-2133 / IAM M-273 / BP-1)).